A 149-amino-acid chain; its full sequence is MKSTLRISLKSGERIFINGAVLRVDRKVALEFLNDVTFLLENHVLQPEDANTPLRQLYFIAQMILINPEGKEQTLTMFRKSIVMLLSCFQDDEILAELKRIDAQVVSGRAFDALKAIRGLYPLEDRILNNQEMAPATIEQIRKEIAPWR.

The protein belongs to the FlbT family.

Functionally, has a post-transcriptional repressor function in flagellum biogenesis. Associates with the 5'-UTR of fljK mRNA and promotes its degradation. This is Probable flagellum biosynthesis repressor protein FlbT from Allorhizobium ampelinum (strain ATCC BAA-846 / DSM 112012 / S4) (Agrobacterium vitis (strain S4)).